The primary structure comprises 341 residues: LIM and senescent cell antigen-like-containing domain protein 2 (341 aa).

LIM zinc-binding domains follow at residues 13–74, 76–133, 138–195, 196–255, and 256–315; these read AVCQ…LFAP, CGSC…EKAK, YICQ…KMGV, PICG…LFGD, and VCYN…FPLE. F22 is modified (phosphoserine). Phosphothreonine is present on T327. Phosphoserine is present on S328.

In terms of assembly, interacts with TGFB1I1. Interacts with integrin-linked protein kinase 1 (ILK) via the first LIM domain, and in competition with LIMS1. Part of the heterotrimeric IPP complex composed of integrin-linked kinase (ILK), LIMS1 or LIMS2, and PARVA.

The protein resides in the nucleus. Its subcellular location is the cell junction. It localises to the focal adhesion. It is found in the cell membrane. In terms of biological role, adapter protein in a cytoplasmic complex linking beta-integrins to the actin cytoskeleton, bridges the complex to cell surface receptor tyrosine kinases and growth factor receptors. Plays a role in modulating cell spreading and migration. This is LIM and senescent cell antigen-like-containing domain protein 2 (LIMS2) from Homo sapiens (Human).